A 365-amino-acid chain; its full sequence is Protein RecA (365 aa).

Residue 81 to 88 (GPESSGKT) participates in ATP binding.

The protein belongs to the RecA family.

It is found in the cytoplasm. Functionally, can catalyze the hydrolysis of ATP in the presence of single-stranded DNA, the ATP-dependent uptake of single-stranded DNA by duplex DNA, and the ATP-dependent hybridization of homologous single-stranded DNAs. It interacts with LexA causing its activation and leading to its autocatalytic cleavage. This Borreliella afzelii (strain PKo) (Borrelia afzelii) protein is Protein RecA.